Here is a 574-residue protein sequence, read N- to C-terminus: Desiccation/radiation resistance protein DR_1769 (574 aa).

An N-terminal signal peptide occupies residues 1 to 33 (MPDPAARRFSLPPFPLAALALSVALLGAPASLA). The span at 400–438 (TAQTQARQAAAAASTSQQPRLPTLAQAPAPTPAPAQTTP) shows a compositional bias: low complexity. The tract at residues 400–461 (TAQTQARQAA…APVPPVASPA (62 aa)) is disordered. A compositionally biased stretch (pro residues) spans 439–459 (RPQPTPAQPATPAAPVPPVAS).

In terms of biological role, plays an important role in resistance to desiccation and radiation, maybe by protecting genome integrity under extreme conditions. This Deinococcus radiodurans (strain ATCC 13939 / DSM 20539 / JCM 16871 / CCUG 27074 / LMG 4051 / NBRC 15346 / NCIMB 9279 / VKM B-1422 / R1) protein is Desiccation/radiation resistance protein DR_1769.